A 245-amino-acid polypeptide reads, in one-letter code: Orotidine 5'-phosphate decarboxylase (245 aa).

Substrate-binding positions include aspartate 22, lysine 44, aspartate 71–threonine 80, threonine 131, arginine 192, glutamine 201, glycine 221, and arginine 222. Lysine 73 serves as the catalytic Proton donor.

The protein belongs to the OMP decarboxylase family. Type 1 subfamily. As to quaternary structure, homodimer.

It carries out the reaction orotidine 5'-phosphate + H(+) = UMP + CO2. It functions in the pathway pyrimidine metabolism; UMP biosynthesis via de novo pathway; UMP from orotate: step 2/2. In terms of biological role, catalyzes the decarboxylation of orotidine 5'-monophosphate (OMP) to uridine 5'-monophosphate (UMP). The chain is Orotidine 5'-phosphate decarboxylase from Shigella dysenteriae serotype 1 (strain Sd197).